Reading from the N-terminus, the 97-residue chain is DNA-directed RNA polymerase subunit omega (97 aa).

This sequence belongs to the RNA polymerase subunit omega family. As to quaternary structure, the RNAP catalytic core consists of 2 alpha, 1 beta, 1 beta' and 1 omega subunit. When a sigma factor is associated with the core the holoenzyme is formed, which can initiate transcription.

The catalysed reaction is RNA(n) + a ribonucleoside 5'-triphosphate = RNA(n+1) + diphosphate. Promotes RNA polymerase assembly. Latches the N- and C-terminal regions of the beta' subunit thereby facilitating its interaction with the beta and alpha subunits. The sequence is that of DNA-directed RNA polymerase subunit omega from Coxiella burnetii (strain CbuK_Q154) (Coxiella burnetii (strain Q154)).